The sequence spans 422 residues: Glutamyl-tRNA reductase (422 aa).

Substrate-binding positions include 49–52, Ser107, 112–114, and Gln118; these read TCNR and EPQ. The active-site Nucleophile is Cys50. 187–192 contributes to the NADP(+) binding site; the sequence is GAGETI.

Belongs to the glutamyl-tRNA reductase family. Homodimer.

It catalyses the reaction (S)-4-amino-5-oxopentanoate + tRNA(Glu) + NADP(+) = L-glutamyl-tRNA(Glu) + NADPH + H(+). Its pathway is porphyrin-containing compound metabolism; protoporphyrin-IX biosynthesis; 5-aminolevulinate from L-glutamyl-tRNA(Glu): step 1/2. Its function is as follows. Catalyzes the NADPH-dependent reduction of glutamyl-tRNA(Glu) to glutamate 1-semialdehyde (GSA). In Pseudomonas aeruginosa (strain ATCC 15692 / DSM 22644 / CIP 104116 / JCM 14847 / LMG 12228 / 1C / PRS 101 / PAO1), this protein is Glutamyl-tRNA reductase.